Here is a 198-residue protein sequence, read N- to C-terminus: Recombination protein RecR (198 aa).

The segment at 57 to 72 adopts a C4-type zinc-finger fold; sequence CSVCGHITDQDPCYIC. The Toprim domain occupies 80 to 175; sequence SVICVVQDPK…KLSRIAHGLP (96 aa).

It belongs to the RecR family.

In terms of biological role, may play a role in DNA repair. It seems to be involved in an RecBC-independent recombinational process of DNA repair. It may act with RecF and RecO. The chain is Recombination protein RecR from Bacillus pumilus (strain SAFR-032).